Here is a 167-residue protein sequence, read N- to C-terminus: Thioredoxin M-type, chloroplastic (167 aa).

The transit peptide at 1–53 (MAMETCFRAWALHAPAGSKDRLLVGNLVLPSKRALAPLSVGRVATRRPRHVCQ) directs the protein to the chloroplast. One can recognise a Thioredoxin domain in the interval 54–165 (SKNAVDEVVV…LTTLIDKYIG (112 aa)). C89 and C92 are oxidised to a cystine.

The protein belongs to the thioredoxin family. Plant M-type subfamily. As to quaternary structure, forms a complex with heterodimeric ferredoxin-thioredoxin reductase (FTR) and ferredoxin.

Its subcellular location is the plastid. It localises to the chloroplast. In terms of biological role, participates in various redox reactions through the reversible oxidation of the active center dithiol to a disulfide. The M form is known to activate NADP-malate dehydrogenase. The protein is Thioredoxin M-type, chloroplastic (TRM1) of Zea mays (Maize).